The chain runs to 215 residues: Sodium channel regulatory subunit beta-3 (215 aa).

The N-terminal stretch at 1-24 is a signal peptide; the sequence is MPAFNRLLPLASLVLIYWVRVCFP. Residues 25–138 form the Ig-like C2-type domain; it reads VCVEVPSETE…EAHRPFVKTT (114 aa). The Extracellular portion of the chain corresponds to 25 to 156; sequence VCVEVPSETE…EEAGEDFTSV (132 aa). Disulfide bonds link Cys26-Cys48 and Cys45-Cys120. Asn95, Asn109, Asn113, and Asn121 each carry an N-linked (GlcNAc...) asparagine glycan. The helical transmembrane segment at 157-178 threads the bilayer; sequence VSEIMMYILLVFLTLWLFIEMI. The Cytoplasmic portion of the chain corresponds to 179–215; that stretch reads YCYRKVSKAEEAAQENASDYLAIPSENKENSVVPVEE.

It belongs to the sodium channel auxiliary subunit SCN3B (TC 8.A.17) family. A voltage-gated sodium (Nav) channel consists of an ion-conducting pore-forming alpha subunit functional on its own that is regulated by one or more beta subunits. Forms homodimers and homotrimers. SCN3B is non-covalently associated with alpha subunits and induces the formation of alpha subunit oligomers, including trimers. Interacts with SCN5A/Nav1.5; regulatory subunit of SCN5A/Nav1.5. Interacts with SCN7A/Nav2.1; probable regulatory subunit of SCN7A/Nav2.1. Interacts with SCN10A; regulatory subunit of SCN10A/Nav1.8. Interacts with NFASC; probably involved in targeting the sodium channels to the nodes of Ranvier. In terms of processing, intramolecular disulfide bonds favor the voltage-gated sodium channel oligomeric complex assembly. Post-translationally, N-glycosylated. Expressed broadly in neurons in the central and peripheral nervous systems, but not in glia and most non-neuronal cells. Weak detection in lung and adrenal gland.

The protein resides in the cell membrane. Regulatory subunit of multiple voltage-gated sodium (Nav) channels directly mediating the depolarization of excitable membranes. Navs, also called VGSCs (voltage-gated sodium channels) or VDSCs (voltage-dependent sodium channels), operate by switching between closed and open conformations depending on the voltage difference across the membrane. In the open conformation they allow Na(+) ions to selectively pass through the pore, along their electrochemical gradient. The influx of Na+ ions provokes membrane depolarization, initiating the propagation of electrical signals throughout cells and tissues. The accessory beta subunits participate in localization and functional modulation of the Nav channels. Voltage-gated sodium channels regulatory subunit that modulates channel gating kinetics. Modulates the activity of SCN2A/Nav1.2, causing a hyperpolarizing shift in the voltage-dependence of inactivation and increasing the fraction of channels operating in the fast gating mode. Also able to induce unique persistent SCN2A/Nav1.2-mediated sodium currents. Could modulate the activity of SCN10A/Nav1.8. This is Sodium channel regulatory subunit beta-3 from Rattus norvegicus (Rat).